The chain runs to 251 residues: Pyridoxine 5'-phosphate synthase (251 aa).

Residue N7 participates in 3-amino-2-oxopropyl phosphate binding. 9-10 (DH) is a 1-deoxy-D-xylulose 5-phosphate binding site. R18 serves as a coordination point for 3-amino-2-oxopropyl phosphate. The Proton acceptor role is filled by H43. 1-deoxy-D-xylulose 5-phosphate-binding residues include R45 and H50. E70 acts as the Proton acceptor in catalysis. 1-deoxy-D-xylulose 5-phosphate is bound at residue T100. The active-site Proton donor is H198. Residues A199 and 220-221 (GH) contribute to the 3-amino-2-oxopropyl phosphate site.

It belongs to the PNP synthase family. In terms of assembly, homooctamer; tetramer of dimers.

The protein localises to the cytoplasm. The catalysed reaction is 3-amino-2-oxopropyl phosphate + 1-deoxy-D-xylulose 5-phosphate = pyridoxine 5'-phosphate + phosphate + 2 H2O + H(+). Its pathway is cofactor biosynthesis; pyridoxine 5'-phosphate biosynthesis; pyridoxine 5'-phosphate from D-erythrose 4-phosphate: step 5/5. In terms of biological role, catalyzes the complicated ring closure reaction between the two acyclic compounds 1-deoxy-D-xylulose-5-phosphate (DXP) and 3-amino-2-oxopropyl phosphate (1-amino-acetone-3-phosphate or AAP) to form pyridoxine 5'-phosphate (PNP) and inorganic phosphate. This is Pyridoxine 5'-phosphate synthase from Aromatoleum aromaticum (strain DSM 19018 / LMG 30748 / EbN1) (Azoarcus sp. (strain EbN1)).